The primary structure comprises 143 residues: Large ribosomal subunit protein uL13 (143 aa).

The protein belongs to the universal ribosomal protein uL13 family. Part of the 50S ribosomal subunit.

This protein is one of the early assembly proteins of the 50S ribosomal subunit, although it is not seen to bind rRNA by itself. It is important during the early stages of 50S assembly. This Neisseria gonorrhoeae (strain ATCC 700825 / FA 1090) protein is Large ribosomal subunit protein uL13.